The primary structure comprises 102 residues: Plastocyanin (102 aa).

In terms of domain architecture, Plastocyanin-like spans 1–102 (AKVEVGDEVG…ANMKGTLTVK (102 aa)). Positions 37, 87, 90, and 95 each coordinate Cu cation.

It belongs to the plastocyanin family. Requires Cu(2+) as cofactor.

Its subcellular location is the plastid. It is found in the chloroplast thylakoid membrane. Participates in electron transfer between P700 and the cytochrome b6-f complex in photosystem I. The chain is Plastocyanin (PETE) from Dryopteris crassirhizoma (Thick stemmed wood fern).